The primary structure comprises 190 residues: Putative glutathione-dependent formaldehyde-activating enzyme (190 aa).

One can recognise a CENP-V/GFA domain in the interval 19–165 (FKGGKLYCHC…FRKVGLQPYD (147 aa)). Cys26, Cys28, Cys47, Cys49, Cys52, Cys94, and Cys97 together coordinate Zn(2+).

It belongs to the Gfa family. Requires Zn(2+) as cofactor.

The catalysed reaction is S-(hydroxymethyl)glutathione = glutathione + formaldehyde. It participates in one-carbon metabolism; formaldehyde degradation; formate from formaldehyde (glutathione route): step 1/3. In terms of biological role, catalyzes the condensation of formaldehyde and glutathione to S-hydroxymethylglutathione. In Pyrenophora teres f. teres (strain 0-1) (Barley net blotch fungus), this protein is Putative glutathione-dependent formaldehyde-activating enzyme.